We begin with the raw amino-acid sequence, 162 residues long: Small ribosomal subunit protein uS9 (162 aa).

The protein belongs to the universal ribosomal protein uS9 family.

The chain is Small ribosomal subunit protein uS9 from Methylobacterium sp. (strain 4-46).